Consider the following 323-residue polypeptide: Delta-aminolevulinic acid dehydratase (323 aa).

3 residues coordinate Zn(2+): Cys-118, Cys-120, and Cys-128. Residue Lys-193 is the Schiff-base intermediate with substrate of the active site. The 5-aminolevulinate site is built by Arg-203 and Arg-215. Glu-231 serves as a coordination point for Mg(2+). Catalysis depends on Lys-246, which acts as the Schiff-base intermediate with substrate. Ser-272 and Tyr-311 together coordinate 5-aminolevulinate.

This sequence belongs to the ALAD family. Homooctamer. Zn(2+) is required as a cofactor.

It catalyses the reaction 2 5-aminolevulinate = porphobilinogen + 2 H2O + H(+). It participates in porphyrin-containing compound metabolism; protoporphyrin-IX biosynthesis; coproporphyrinogen-III from 5-aminolevulinate: step 1/4. Catalyzes an early step in the biosynthesis of tetrapyrroles. Binds two molecules of 5-aminolevulinate per subunit, each at a distinct site, and catalyzes their condensation to form porphobilinogen. The polypeptide is Delta-aminolevulinic acid dehydratase (hemB) (Helicobacter pylori (strain J99 / ATCC 700824) (Campylobacter pylori J99)).